The sequence spans 684 residues: Amino-acid acetyltransferase, mitochondrial (684 aa).

The segment at 414-439 (PQDATNSASEPRDPSQLSTVATRRKR) is disordered. The segment covering 415–434 (QDATNSASEPRDPSQLSTVA) has biased composition (polar residues). In terms of domain architecture, N-acetyltransferase spans 505-674 (GKSRMTLNDP…YEGVCRGIEP (170 aa)).

This sequence belongs to the acetyltransferase family.

It localises to the mitochondrion. The enzyme catalyses L-glutamate + acetyl-CoA = N-acetyl-L-glutamate + CoA + H(+). It participates in amino-acid biosynthesis; L-arginine biosynthesis; N(2)-acetyl-L-ornithine from L-glutamate: step 1/4. Functionally, N-acetylglutamate synthase involved in arginine biosynthesis. This is Amino-acid acetyltransferase, mitochondrial (ARG2) from Ajellomyces capsulatus (strain NAm1 / WU24) (Darling's disease fungus).